A 163-amino-acid chain; its full sequence is Nucleotide-binding protein Bcer98_0876 (163 aa).

The protein belongs to the YajQ family.

Its function is as follows. Nucleotide-binding protein. In Bacillus cytotoxicus (strain DSM 22905 / CIP 110041 / 391-98 / NVH 391-98), this protein is Nucleotide-binding protein Bcer98_0876.